Here is a 324-residue protein sequence, read N- to C-terminus: MKFGLFFLNFINSTTVQEQSIVRMQEITEYVDKLNFEQILVYENHFSGNGVVGAPLTVSGFLLGLTEKIKIGSLNHIITTHHPVRIAEEACLLDQLSEGRFILGFSDCEKKDEMRLFNRPVEYQQQLFEECYEIINDALTTGYCNPDNDFYSFPKISVNPHAYTQGGPRRYVTATSHHIVEWAAKKGIPLIFKWDDSNDVRYEYAERYKAVADKYGIDLSAIDHQLMVLVNYNEDSHKAKQETRAFIRDYVLEMYPNENLENKLEEIITENAVGDYTECIAAAKLAIEKCGAKSVLLSFEPMNDLMHQKNVINIVNDNIKKYHM.

It belongs to the bacterial luciferase oxidoreductase family. As to quaternary structure, heterodimer of an alpha and a beta chain.

The enzyme catalyses a long-chain fatty aldehyde + FMNH2 + O2 = a long-chain fatty acid + hnu + FMN + H2O + 2 H(+). Its function is as follows. Light-emitting reaction in luminous bacteria. The specific role of the beta subunit is unknown, but it is absolutely required for bioluminescence activity. This Photorhabdus laumondii subsp. laumondii (strain DSM 15139 / CIP 105565 / TT01) (Photorhabdus luminescens subsp. laumondii) protein is Alkanal monooxygenase beta chain (luxB).